The following is a 121-amino-acid chain: Large ribosomal subunit protein bL20 (121 aa).

The protein belongs to the bacterial ribosomal protein bL20 family.

Functionally, binds directly to 23S ribosomal RNA and is necessary for the in vitro assembly process of the 50S ribosomal subunit. It is not involved in the protein synthesizing functions of that subunit. This is Large ribosomal subunit protein bL20 from Ruegeria pomeroyi (strain ATCC 700808 / DSM 15171 / DSS-3) (Silicibacter pomeroyi).